The following is a 267-amino-acid chain: 5'-nucleotidase SurE (267 aa).

A divalent metal cation-binding residues include aspartate 9, aspartate 10, serine 40, and asparagine 97.

It belongs to the SurE nucleotidase family. The cofactor is a divalent metal cation.

The protein localises to the cytoplasm. The enzyme catalyses a ribonucleoside 5'-phosphate + H2O = a ribonucleoside + phosphate. In terms of biological role, nucleotidase that shows phosphatase activity on nucleoside 5'-monophosphates. This chain is 5'-nucleotidase SurE, found in Helicobacter pylori (strain Shi470).